We begin with the raw amino-acid sequence, 331 residues long: Putative type II secretion system C-type protein YghF (331 aa).

Residues 44-60 (MFWLMLLIISAKMAHSL) form a helical membrane-spanning segment.

This sequence belongs to the GSP C family.

It localises to the cell inner membrane. Involved in a type II secretion system (T2SS, formerly general secretion pathway, GSP) for the export of folded proteins across the outer membrane. The polypeptide is Putative type II secretion system C-type protein YghF (Escherichia coli (strain K12)).